The chain runs to 585 residues: Arginine--tRNA ligase (585 aa).

Residues 131-141 (ANPTGPMHVGH) carry the 'HIGH' region motif.

This sequence belongs to the class-I aminoacyl-tRNA synthetase family. In terms of assembly, monomer.

The protein localises to the cytoplasm. The enzyme catalyses tRNA(Arg) + L-arginine + ATP = L-arginyl-tRNA(Arg) + AMP + diphosphate. The sequence is that of Arginine--tRNA ligase from Allorhizobium ampelinum (strain ATCC BAA-846 / DSM 112012 / S4) (Agrobacterium vitis (strain S4)).